A 593-amino-acid chain; its full sequence is Salivary alpha-glucosidase (593 aa).

A signal peptide spans 1–19; the sequence is MPPLGVLLLLVALGHSTQG. Ca(2+)-binding residues include Asp49, Asp51, Asp53, Ile55, Asp57, and Asn130. 2 N-linked (GlcNAc...) asparagine glycosylation sites follow: Asn130 and Asn163. Ca(2+) is bound by residues Asp201, Tyr235, Leu236, and Glu238. Asn295, Asn310, Asn338, Asn414, Asn445, and Asn453 each carry an N-linked (GlcNAc...) asparagine glycan. Asn338 is an N-acetyl-beta-D-glucosamine binding site.

This sequence belongs to the glycosyl hydrolase 13 family. In terms of tissue distribution, saliva (at protein level). Proximal lateral lobes of the salivary gland (at protein level).

The protein resides in the secreted. It catalyses the reaction Hydrolysis of terminal, non-reducing (1-&gt;4)-linked alpha-D-glucose residues with release of alpha-D-glucose.. In terms of biological role, functions as a glucosidase that shows high activity toward sucrose, a major component of nectar. Assists the mosquito in its sugar-feeding capabilities. The sequence is that of Salivary alpha-glucosidase from Anopheles gambiae (African malaria mosquito).